A 127-amino-acid polypeptide reads, in one-letter code: uncharacterized protein (127 aa).

This is an uncharacterized protein from Schizosaccharomyces pombe (strain 972 / ATCC 24843) (Fission yeast).